The chain runs to 256 residues: MSLEALQQRLGYRFSKPELLQQALTHRSHNAMHNERLEFLGDSILNCAVADMLYGMFGKLDEGDLSRVRANLVKQQALYEIAQMLLLPDELRLGEGELKSGGFRRPSILADALEAIFGAVFLDGGFDAARTLIRKLYIPILEQVDPRTLGKDAKTLLQEYLQGHKIALPQYAVVATHGAAHNQQFEVECTIPKLEIRVSGSGASRRAAEQSAAKLALEEAHRLVPQLVKRSRAERTGKTRKQATPPDPQLSLRLKE.

Residues 3–125 (LEALQQRLGY…IFGAVFLDGG (123 aa)) form the RNase III domain. Glutamate 38 contributes to the Mg(2+) binding site. Aspartate 42 is a catalytic residue. 2 residues coordinate Mg(2+): aspartate 111 and glutamate 114. Residue glutamate 114 is part of the active site. The DRBM domain maps to 152 to 222 (DAKTLLQEYL…AKLALEEAHR (71 aa)). The disordered stretch occupies residues 227 to 256 (LVKRSRAERTGKTRKQATPPDPQLSLRLKE).

This sequence belongs to the ribonuclease III family. In terms of assembly, homodimer. It depends on Mg(2+) as a cofactor.

It is found in the cytoplasm. It carries out the reaction Endonucleolytic cleavage to 5'-phosphomonoester.. Digests double-stranded RNA. Involved in the processing of primary rRNA transcript to yield the immediate precursors to the large and small rRNAs (23S and 16S). Processes some mRNAs, and tRNAs when they are encoded in the rRNA operon. Processes pre-crRNA and tracrRNA of type II CRISPR loci if present in the organism. In Ralstonia nicotianae (strain ATCC BAA-1114 / GMI1000) (Ralstonia solanacearum), this protein is Ribonuclease 3.